Reading from the N-terminus, the 393-residue chain is S-adenosylmethionine synthase (393 aa).

H16 contacts ATP. Residue D18 coordinates Mg(2+). A K(+)-binding site is contributed by E44. Positions 57 and 100 each coordinate L-methionine. The flexible loop stretch occupies residues 100–110; it reads QSNDIAQGVDH. Residues 167–169, 238–239, D247, 253–254, A270, and K274 contribute to the ATP site; these read DAK, RF, and RK. D247 contacts L-methionine. K278 provides a ligand contact to L-methionine.

This sequence belongs to the AdoMet synthase family. As to quaternary structure, homotetramer; dimer of dimers. It depends on Mg(2+) as a cofactor. K(+) serves as cofactor.

It is found in the cytoplasm. It catalyses the reaction L-methionine + ATP + H2O = S-adenosyl-L-methionine + phosphate + diphosphate. It participates in amino-acid biosynthesis; S-adenosyl-L-methionine biosynthesis; S-adenosyl-L-methionine from L-methionine: step 1/1. In terms of biological role, catalyzes the formation of S-adenosylmethionine (AdoMet) from methionine and ATP. The overall synthetic reaction is composed of two sequential steps, AdoMet formation and the subsequent tripolyphosphate hydrolysis which occurs prior to release of AdoMet from the enzyme. In Polaromonas sp. (strain JS666 / ATCC BAA-500), this protein is S-adenosylmethionine synthase.